A 652-amino-acid chain; its full sequence is DNA ligase (652 aa).

Residues 30–34 (DEVYD), 79–80 (SL), and Glu-108 contribute to the NAD(+) site. Lys-110 (N6-AMP-lysine intermediate) is an active-site residue. Positions 131, 165, 280, and 304 each coordinate NAD(+). Zn(2+)-binding residues include Cys-398, Cys-401, Cys-414, and Cys-419. Positions 574–652 (AKENPFKGKS…DEMRSKIEQA (79 aa)) constitute a BRCT domain.

This sequence belongs to the NAD-dependent DNA ligase family. LigA subfamily. Mg(2+) is required as a cofactor. It depends on Mn(2+) as a cofactor.

The catalysed reaction is NAD(+) + (deoxyribonucleotide)n-3'-hydroxyl + 5'-phospho-(deoxyribonucleotide)m = (deoxyribonucleotide)n+m + AMP + beta-nicotinamide D-nucleotide.. DNA ligase that catalyzes the formation of phosphodiester linkages between 5'-phosphoryl and 3'-hydroxyl groups in double-stranded DNA using NAD as a coenzyme and as the energy source for the reaction. It is essential for DNA replication and repair of damaged DNA. This is DNA ligase from Sulfurimonas denitrificans (strain ATCC 33889 / DSM 1251) (Thiomicrospira denitrificans (strain ATCC 33889 / DSM 1251)).